The sequence spans 430 residues: C4-dicarboxylate transport protein (430 aa).

The next 9 helical transmembrane spans lie at 8 to 28, 44 to 64, 76 to 96, 144 to 164, 184 to 204, 222 to 242, 289 to 309, 326 to 346, and 352 to 372; these read SLYF…HFYP, LIKM…IAGM, AALL…LVVV, AFAS…GFAL, VIFG…FGAM, LILC…GSIA, VVGL…SIYL, IWHQ…AAGV, and IVLA…LALI.

This sequence belongs to the dicarboxylate/amino acid:cation symporter (DAACS) (TC 2.A.23) family.

Its subcellular location is the cell inner membrane. In terms of biological role, responsible for the transport of dicarboxylates such as succinate, fumarate, and malate from the periplasm across the membrane. This chain is C4-dicarboxylate transport protein, found in Pectobacterium atrosepticum (strain SCRI 1043 / ATCC BAA-672) (Erwinia carotovora subsp. atroseptica).